The chain runs to 694 residues: Cyclic nucleotide-gated ion channel 4 (694 aa).

A compositionally biased stretch (basic and acidic residues) spans 1–15 (MATEQEFTRASRFSR). Positions 1–64 (MATEQEFTRA…RIGLTCGGRR (64 aa)) are disordered. The Cytoplasmic segment spans residues 1 to 92 (MATEQEFTRA…RSKWVREWNK (92 aa)). Acidic residues predominate over residues 24–53 (SEEDNTEEEDEEEEEMEEIEEEEEEEEEED). The helical transmembrane segment at 93–113 (VFLLVCATGLFVDPLFLYTLS) threads the bilayer. Topologically, residues 114-126 (VSDTCMCLLVDGW) are extracellular. Residues 127 to 147 (LALTVTALRSMTDLLHLWNIW) form a helical membrane-spanning segment. The Cytoplasmic segment spans residues 148–187 (IQFKIARRWPYPGGDSDGDTNKGGGTRGSTRVAPPYVKKN). A helical transmembrane segment spans residues 188-208 (GFFFDLFVILPLPQVVLWVVI). Topologically, residues 209–216 (PSLLKRGS) are extracellular. Residues 217-237 (VTLVVSVLLVTFLFQYLPKIY) traverse the membrane as a helical segment. The Cytoplasmic segment spans residues 238 to 251 (HSIRHLRRNATLSG). Residues 252 to 272 (YIFGTVWWGIALNMIAYFVAA) traverse the membrane as a helical segment. Topologically, residues 273 to 392 (HAAGACWYLL…LESTTEWSEV (120 aa)) are extracellular. The chain crosses the membrane as a helical span at residues 393–413 (VFNIIVLTSGLLLVTMLIGNI). Residues 414–694 (KVFLHATTSK…KPNPDDFDDY (281 aa)) lie on the Cytoplasmic side of the membrane. Residues 496–626 (LFQH…ARYY) and D565 contribute to the a nucleoside 3',5'-cyclic phosphate site. Residues 610–626 (FRYTFVNEKVKRSARYY) form a calmodulin-binding region. The 30-residue stretch at 631-660 (RTWAAVAVQLAWRRYKHRLTLTSLSFIRPR) folds into the IQ domain.

It belongs to the cyclic nucleotide-gated cation channel (TC 1.A.1.5) family. Homotetramer or heterotetramer.

It is found in the cell membrane. Acts as a cyclic nucleotide-gated ion channel. Permeable to potassium and sodium in a cyclic nucleotide-dependent fashion (cAMP or cGMP). Might constitute a common downstream component of the signaling pathways leading to hypersensitive response (HR). The protein is Cyclic nucleotide-gated ion channel 4 (CNGC4) of Arabidopsis thaliana (Mouse-ear cress).